Here is a 3603-residue protein sequence, read N- to C-terminus: Plipastatin synthase subunit D (3603 aa).

Residues 7–306 (IQDIYPLSYM…NTMPVRVQGA (300 aa)) are condensation 1. The domain 1 (proline-activating) stretch occupies residues 7–1043 (IQDIYPLSYM…ALIIREAEQN (1037 aa)). The segment at 490–889 (TYRELNKAAN…NHPDISEAAI (400 aa)) is adenylation 1. In terms of domain architecture, Carrier 1 spans 966 to 1041 (APRNLLEAKL…GLALIIREAE (76 aa)). Ser-1001 bears the O-(pantetheine 4'-phosphoryl)serine mark. A condensation 2 region spans residues 1053 to 1334 (KRDTYPVSSA…NTLALRTRPA (282 aa)). The tract at residues 1053–2069 (KRDTYPVSSA…TVEGLATVIR (1017 aa)) is domain 2 (glutamine-activating). An adenylation 2 region spans residues 1521–1924 (TYKELNEQAN…SIEGVREAAV (404 aa)). The Carrier 2 domain maps to 1997–2072 (APRNVTEMKL…GLATVIREGT (76 aa)). An O-(pantetheine 4'-phosphoryl)serine modification is found at Ser-2032. The interval 2084–2374 (KQETYPVSSA…NTLALRTRPE (291 aa)) is condensation 3. Residues 2084–3596 (KQETYPVSSA…ELTEDALQEI (1513 aa)) form a domain 3 (proline-activating) region. The interval 2560 to 2956 (TYQELDEWSN…CIKGVKDAAV (397 aa)) is adenylation 3. The region spanning 3034–3108 (PPSSKMEQIL…ELAAYIRDSD (75 aa)) is the Carrier 3 domain. Ser-3069 carries the O-(pantetheine 4'-phosphoryl)serine modification. Residues 3116-3596 (VEGDVQWSPV…ELTEDALQEI (481 aa)) form an epimerization region.

It belongs to the ATP-dependent AMP-binding enzyme family. Pantetheine 4'-phosphate serves as cofactor.

This protein is a multifunctional enzyme, able to activate and polymerize the amino acids Pro, Gln and Tyr as part of the biosynthesis of the lipopeptide antibiotic plipastatin. The Tyr residue is further epimerized to the D-isomer form. The activation sites for these amino acids consist of individual domains. This is Plipastatin synthase subunit D (ppsD) from Bacillus subtilis (strain 168).